The following is a 101-amino-acid chain: Vacuolar ATPase assembly integral membrane protein VMA21 (101 aa).

Over 1–25 (MERLDKAALNALQPSDFRNESSLAS) the chain is Cytoplasmic. The helical transmembrane segment at 26-46 (TLKTLLFFTALMITVPIGLYF) threads the bilayer. The Lumenal segment spans residues 47–65 (TTKSYVFEGAFGMSNRDSY). Residues 66 to 86 (FYAAIVAVVAVHVVLALFVYV) traverse the membrane as a helical segment. The Cytoplasmic portion of the chain corresponds to 87–101 (AWNEGSRQWREGKQD).

This sequence belongs to the VMA21 family. As to quaternary structure, associates with the V0 complex of the vacuolar ATPase (V-ATPase). Interacts with ATP6AP2.

The protein resides in the endoplasmic reticulum membrane. Its subcellular location is the endoplasmic reticulum-Golgi intermediate compartment membrane. The protein localises to the cytoplasmic vesicle. It localises to the COPII-coated vesicle membrane. In terms of biological role, required for the assembly of the V0 complex of the vacuolar ATPase (V-ATPase) in the endoplasmic reticulum. The sequence is that of Vacuolar ATPase assembly integral membrane protein VMA21 from Bos taurus (Bovine).